Here is a 435-residue protein sequence, read N- to C-terminus: Zinc finger CCCH domain-containing protein 17 (435 aa).

Disordered stretches follow at residues methionine 1–serine 30 and threonine 58–histidine 107. The C3H1-type 1 zinc finger occupies serine 28 to leucine 54. Residues serine 77 to glycine 103 show a composition bias toward gly residues. Residues lysine 108 to serine 135 form a C3H1-type 2 zinc finger. 7 WD repeats span residues glycine 148–asparagine 189, glycine 191–leucine 225, glycine 227–glutamate 264, glycine 271–threonine 308, aspartate 311–valine 348, glutamate 355–arginine 395, and phenylalanine 397–lysine 435.

The chain is Zinc finger CCCH domain-containing protein 17 from Oryza sativa subsp. japonica (Rice).